The sequence spans 1883 residues: Transmembrane protein 131 (1883 aa).

A signal peptide spans 1–22 (MGKRAGGGATGATTAAVSTSAG). The Lumenal segment spans residues 23–1117 (AGLEPAAARS…AEALPRPNWE (1095 aa)). The interval 109–283 (RFEPPMLDFH…ETKGVMRASF (175 aa)) is papD-L domain. A glycan (N-linked (GlcNAc...) asparagine) is linked at asparagine 300. A Phosphoserine modification is found at serine 803. A helical transmembrane segment spans residues 1118–1138 (LALYIIISGIMSALFLLVIGT). Over 1139–1883 (AYLEAQGIWE…WSNSHFPHEN (745 aa)) the chain is Cytoplasmic. Disordered regions lie at residues 1198–1580 (GAGG…DSLY), 1593–1656 (LKQR…KNGN), 1670–1712 (PGGN…PVSN), 1766–1789 (WESP…HTAT), and 1832–1858 (MGTE…TYNP). Residues 1237 to 1261 (AKNSSSTSSRTSAQAASSQSANKTS) show a composition bias toward low complexity. The span at 1302 to 1316 (PQPPLPPPVPQPQEP) shows a compositional bias: pro residues. 2 positions are modified to phosphoserine: serine 1322 and serine 1342. Basic and acidic residues-rich tracts occupy residues 1330–1343 (SHPE…HSSE) and 1353–1364 (AMDKDFDHHDSP). Position 1375 is a phosphoserine (serine 1375). Residues 1380–1394 (SKGKGKPLQRKVKPP) are compositionally biased toward basic residues. The span at 1395-1417 (KKQEEKEKKGKGKPQEDELKDSL) shows a compositional bias: basic and acidic residues. Over residues 1423–1434 (SSTTTETSNPDT) the composition is skewed to low complexity. Residues 1436–1458 (PLLKEDTEKQKGKQAMPEKHESE) show a composition bias toward basic and acidic residues. Polar residues-rich tracts occupy residues 1510–1526 (AMTS…TKGT) and 1542–1553 (PNSQELGNTSSS). The span at 1602 to 1611 (PASPSPPAAP) shows a compositional bias: pro residues. Over residues 1619-1630 (SYSSIVNSSSSS) the composition is skewed to low complexity. Over residues 1678-1690 (VSSNKTGFSSSLG) the composition is skewed to polar residues. Composition is skewed to low complexity over residues 1773–1784 (PSPSWPASSGSP) and 1837–1849 (SPAP…SSPA). A phosphoserine mark is found at serine 1863 and serine 1871.

The protein belongs to the TMEM131 family. Interacts (via PapD-L domain) with COL1A2 (via C-terminus); the interaction is direct, may occur with other collagen proteins, and is involved in assembly and TRAPPIII ER-to-Golgi transport complex-dependent secretion of collagen. Interacts (via C-terminus) with TRAPPC8 (via C-terminus); the interaction is direct.

The protein resides in the membrane. Functionally, collagen binding transmembrane protein involved in collagen secretion by recruiting the ER-to-Golgi transport complex TRAPPIII. May play a role in the immune response to viral infection. This chain is Transmembrane protein 131, found in Homo sapiens (Human).